We begin with the raw amino-acid sequence, 582 residues long: ATP-dependent lipid A-core flippase (582 aa).

5 helical membrane-spanning segments follow: residues 27–47 (LIVA…MISL), 69–89 (LIIF…TYCL), 142–162 (ALVS…LMFY), 165–185 (WQLS…IGVV), and 249–269 (AAAN…VLYL). Residues 28 to 310 (IVAVIALVIN…LTNVTSQFQR (283 aa)) enclose the ABC transmembrane type-1 domain. One can recognise an ABC transporter domain in the interval 342 to 578 (VSVKDVSFTY…NGAYAQLHRI (237 aa)). 376-383 (GRSGSGKS) serves as a coordination point for ATP.

Belongs to the ABC transporter superfamily. Lipid exporter (TC 3.A.1.106) family. Homodimer.

Its subcellular location is the cell inner membrane. It carries out the reaction ATP + H2O + lipid A-core oligosaccharideSide 1 = ADP + phosphate + lipid A-core oligosaccharideSide 2.. Its function is as follows. Involved in lipopolysaccharide (LPS) biosynthesis. Translocates lipid A-core from the inner to the outer leaflet of the inner membrane. Transmembrane domains (TMD) form a pore in the inner membrane and the ATP-binding domain (NBD) is responsible for energy generation. In Vibrio parahaemolyticus serotype O3:K6 (strain RIMD 2210633), this protein is ATP-dependent lipid A-core flippase.